The sequence spans 254 residues: 3-dehydroquinate dehydratase (254 aa).

3-dehydroquinate contacts are provided by residues 47-49 and Arg83; that span reads EFR. Catalysis depends on His144, which acts as the Proton donor/acceptor. Lys171 acts as the Schiff-base intermediate with substrate in catalysis. 3-dehydroquinate is bound by residues Arg213, Ser232, and Gln236.

The protein belongs to the type-I 3-dehydroquinase family. As to quaternary structure, homodimer.

The catalysed reaction is 3-dehydroquinate = 3-dehydroshikimate + H2O. Its pathway is metabolic intermediate biosynthesis; chorismate biosynthesis; chorismate from D-erythrose 4-phosphate and phosphoenolpyruvate: step 3/7. Functionally, involved in the third step of the chorismate pathway, which leads to the biosynthesis of aromatic amino acids. Catalyzes the cis-dehydration of 3-dehydroquinate (DHQ) and introduces the first double bond of the aromatic ring to yield 3-dehydroshikimate. This Neisseria meningitidis serogroup A / serotype 4A (strain DSM 15465 / Z2491) protein is 3-dehydroquinate dehydratase.